Reading from the N-terminus, the 72-residue chain is Translation initiation factor IF-1 (72 aa).

An S1-like domain is found at 1 to 72 (MSKSDYIELE…TKGRIIFRHK (72 aa)).

The protein belongs to the IF-1 family. As to quaternary structure, component of the 30S ribosomal translation pre-initiation complex which assembles on the 30S ribosome in the order IF-2 and IF-3, IF-1 and N-formylmethionyl-tRNA(fMet); mRNA recruitment can occur at any time during PIC assembly.

Its subcellular location is the cytoplasm. One of the essential components for the initiation of protein synthesis. Stabilizes the binding of IF-2 and IF-3 on the 30S subunit to which N-formylmethionyl-tRNA(fMet) subsequently binds. Helps modulate mRNA selection, yielding the 30S pre-initiation complex (PIC). Upon addition of the 50S ribosomal subunit IF-1, IF-2 and IF-3 are released leaving the mature 70S translation initiation complex. This chain is Translation initiation factor IF-1, found in Ruthia magnifica subsp. Calyptogena magnifica.